The following is a 175-amino-acid chain: uncharacterized protein (175 aa).

A signal peptide spans 1–23; sequence MILVLLLILIAFLYIYFPSSLNQ.

This is an uncharacterized protein from Invertebrate iridescent virus 6 (IIV-6).